Reading from the N-terminus, the 317-residue chain is Probable methyltransferase tdiE (317 aa).

This sequence belongs to the methyltransferase superfamily. LaeA methyltransferase family.

It functions in the pathway secondary metabolite biosynthesis. Probable methyltransferase; part of the gene cluster that mediates the biosynthesis of terrequinone A, an antitumor agent. The first step in the biosynthetic pathway for terrequinone A is formation of indole pyruvic acid (IPA) from L-tryptophan by the aminotransferase tdiD. The nonribosomal peptide synthase tdiA then immediately converts unstable IPA to didemethylasterriquinone D (DDAQ D), via condensation of 2 IPA molecules. The symmetric connectivity of the 2 IPA molecules is thought to arise by head-to-tail dual Claisen condensations facilitated by the TE domain. TdiB then catalyzes reverse prenylation by transferring dimethylallyl diphosphate to carbon atom 2' of DDAQ D, to yield asterriquinone C-1. Finally, tdiC and tdiE enzymes robustly convert asterriquinone C-1 to terrequinone A via a transformation involving regular prenylation at carbon atom 5, which requires elimination of the hydroxy group on C-5. The sequence is that of Probable methyltransferase tdiE from Emericella nidulans (strain FGSC A4 / ATCC 38163 / CBS 112.46 / NRRL 194 / M139) (Aspergillus nidulans).